Consider the following 285-residue polypeptide: MSTLEENYQYCHQIMKDYSKSFSYAFDMLPEQQRRAIWAIYAVCRIVDDSIDVHQDVEYLHKINRDVKAIEHQTTTTFESDDRIMTAFADAATHFQMNFQALYDLIDTVEADQHFEMFETDRGLLDYCYGVAGTVGVLLIPILATPPSDEAYEYGKQLGEALQLTNILRDVGEDYRNGRIYFSKARLNEFNVSIADEIERDQLSDNYIKIWEFYATLADNNYDMVLNHLDVYNEESRMIIELAAQVYRGILTEVRKADYSLKDRAYVSKWKKHKIYRNLKKKYKD.

Residues 18–21 (YSKS), Y41, and R45 each bind (2E,6E)-farnesyl diphosphate. Residues D48 and D52 each contribute to the Mg(2+) site. Q163 contributes to the (2E,6E)-farnesyl diphosphate binding site. Residue N166 participates in Mg(2+) binding. R169 contributes to the (2E,6E)-farnesyl diphosphate binding site. D170 contacts Mg(2+). (2E,6E)-farnesyl diphosphate is bound at residue Y247.

It belongs to the phytoene/squalene synthase family. CrtM subfamily. It depends on Mg(2+) as a cofactor.

The catalysed reaction is 2 (2E,6E)-farnesyl diphosphate = 15-cis-4,4'-diapophytoene + 2 diphosphate. Its pathway is carotenoid biosynthesis; staphyloxanthin biosynthesis; staphyloxanthin from farnesyl diphosphate: step 1/5. Its function is as follows. Involved in the biosynthesis of the yellow-orange carotenoid staphyloxanthin, which plays a role in the virulence via its protective function against oxidative stress. Catalyzes the head-to-head condensation of two molecules of farnesyl diphosphate (FPP) into the colorless C(30) carotenoid 4,4'-diapophytoene (dehydrosqualene). The protein is 4,4'-diapophytoene synthase (crtM) of Staphylococcus haemolyticus (strain JCSC1435).